We begin with the raw amino-acid sequence, 445 residues long: Ribosomal protein uS12 methylthiotransferase RimO (445 aa).

Residues 4–119 (IKVALVSLGC…LLESIKVFLK (116 aa)) form the MTTase N-terminal domain. Residues C13, C48, C82, C156, C160, and C163 each coordinate [4Fe-4S] cluster. One can recognise a Radical SAM core domain in the interval 142–372 (TTPTYTAYVR…MILQQSISKD (231 aa)). The region spanning 375–441 (KEKIGKTYEV…EYDLIGVVYN (67 aa)) is the TRAM domain.

Belongs to the methylthiotransferase family. RimO subfamily. [4Fe-4S] cluster serves as cofactor.

It is found in the cytoplasm. It carries out the reaction L-aspartate(89)-[ribosomal protein uS12]-hydrogen + (sulfur carrier)-SH + AH2 + 2 S-adenosyl-L-methionine = 3-methylsulfanyl-L-aspartate(89)-[ribosomal protein uS12]-hydrogen + (sulfur carrier)-H + 5'-deoxyadenosine + L-methionine + A + S-adenosyl-L-homocysteine + 2 H(+). Its function is as follows. Catalyzes the methylthiolation of an aspartic acid residue of ribosomal protein uS12. The chain is Ribosomal protein uS12 methylthiotransferase RimO from Clostridium botulinum (strain ATCC 19397 / Type A).